We begin with the raw amino-acid sequence, 125 residues long: Small ribosomal subunit protein bS6 (125 aa).

Residues 96–125 (VTEASPMKAAKEERKPLAEVENNDFEDAEE) are disordered. Residues 104–113 (AAKEERKPLA) are compositionally biased toward basic and acidic residues. Acidic residues predominate over residues 116-125 (ENNDFEDAEE).

Belongs to the bacterial ribosomal protein bS6 family.

Its function is as follows. Binds together with bS18 to 16S ribosomal RNA. The chain is Small ribosomal subunit protein bS6 from Haemophilus influenzae (strain 86-028NP).